We begin with the raw amino-acid sequence, 250 residues long: Deoxynucleoside kinase (250 aa).

27–35 provides a ligand contact to ATP; it reads GNIGSGKTT. Substrate is bound by residues glutamate 52, tyrosine 70, and glutamine 81. Glutamate 104 functions as the Proton acceptor in the catalytic mechanism. Substrate-binding residues include arginine 105 and glutamate 172. Serine 236, serine 241, and serine 243 each carry phosphoserine.

It belongs to the DCK/DGK family. As to quaternary structure, monomer.

The enzyme catalyses a 2'-deoxyribonucleoside + ATP = a 2'-deoxyribonucleoside 5'-phosphate + ADP + H(+). With respect to regulation, subject to feedback inhibition by dTTP. Functionally, deoxyribonucleoside kinase that has a broad specificity phosphorylating thymidine, 2'-deoxyriboadenosine, 2'-deoxyribocytidine and 2'-deoxyriboguanosine. Specificity is higher for pyrimidine nucleosides. Several anti-viral and anti-cancer nucleoside analogs are also efficiently phosphorylated. This Drosophila melanogaster (Fruit fly) protein is Deoxynucleoside kinase (dnk).